Here is an 838-residue protein sequence, read N- to C-terminus: Ras-interacting protein RIP3 (838 aa).

Disordered regions lie at residues 66–97 (VSTSNNNATSGNSTPPNNAISPNQQQQQQQQA), 157–290 (KPTT…TSPK), and 305–336 (NSKTLQKSDKTSEKENKQQQPDSSKTQQQQQA). Low complexity-rich tracts occupy residues 67–97 (STSNNNATSGNSTPPNNAISPNQQQQQQQQA), 157–241 (KPTT…QQKP), and 248–284 (PQNISQPQNISQQQNTNNVQQNNQQQQQQQQQQQQQQ). The segment covering 310 to 321 (QKSDKTSEKENK) has biased composition (basic and acidic residues). Residues 441–515 (QLKVRVIEKA…KDEVLVLCPN (75 aa)) enclose the CRIM domain. 2 disordered regions span residues 522–581 (KSSS…QQTQ) and 594–646 (QQQQ…GPDA). 3 stretches are compositionally biased toward low complexity: residues 537 to 556 (NNNNSVNSNSSNNSNSSNNN), 563 to 581 (QPQQSQQQQQQTQQTQQTQ), and 594 to 620 (QQQQQQQQQHPQQIQQQLSSNQLQPDQ). A compositionally biased stretch (gly residues) spans 621 to 631 (VGGGGGGGGGN). The RBD domain occupies 648 to 717 (LVVKITLPDS…GGADLILVSR (70 aa)).

It belongs to the SIN1 family. In terms of assembly, interacts with activated RasG. Part of a complex, TORC2, consisting of tor, lst8, piaA and ripA. Additional proteins, such as 14-3-3 and heat-shock proteins, may also belong to the TORC2 complex.

In terms of biological role, component of a Ras-regulated pathway involved in integrating chemotaxis and signal relay pathways that are essential for aggregation. The polypeptide is Ras-interacting protein RIP3 (ripA) (Dictyostelium discoideum (Social amoeba)).